The sequence spans 120 residues: UPF0102 protein CbuK_0265 (120 aa).

Belongs to the UPF0102 family.

This Coxiella burnetii (strain CbuK_Q154) (Coxiella burnetii (strain Q154)) protein is UPF0102 protein CbuK_0265.